A 181-amino-acid chain; its full sequence is ADP-ribosylation factor 1 (181 aa).

Gly-2 carries the N-myristoyl glycine lipid modification. GTP is bound by residues 24–31 (GLDAAGKT), 67–71 (DVGGQ), and 126–129 (NKQD).

Belongs to the small GTPase superfamily. Arf family. In terms of assembly, interacts with AGD7 and GDAP1. GDP-locked form interacts with cytosolic tail of p24 proteins. Interacts with AGD5 at trans-Golgi network. Interacts with A.tumefaciens AK6b.

It is found in the golgi apparatus. The protein resides in the endosome. It localises to the trans-Golgi network. The protein localises to the early endosome. It catalyses the reaction GTP + H2O = GDP + phosphate + H(+). Activated by AGD7 and AGD10. GTP-binding protein involved in protein trafficking; required for the sequence-specific vacuolar sorting route to the lytic vacuole, for the ER-to-Golgi transport and for the Golgi-derived transport to the plasma membrane. Involved in the recruitment of COPI and GDAP1 to membranes. Required for recycling of PIN auxin transporters (e.g. PIN1 and PIN2) in a fungal toxin brefeldin A (BFA)-dependent manner. Involved in various auxin-dependent developmental processes. The polypeptide is ADP-ribosylation factor 1 (Arabidopsis thaliana (Mouse-ear cress)).